The chain runs to 68 residues: uncharacterized protein (68 aa).

This is an uncharacterized protein from Escherichia coli O6:H1 (strain CFT073 / ATCC 700928 / UPEC).